The primary structure comprises 332 residues: N-arachidonyl glycine receptor (332 aa).

The Extracellular segment spans residues 1-26 (MTTPHSQAQPGLPIDPHPDEYKVAAL). A helical transmembrane segment spans residues 27–47 (VFYSCIFIIGLFVNVTALWVF). Topologically, residues 48–56 (SCTTKKRTT) are cytoplasmic. Residues 57-77 (VTVYMMNVALLDLVFIMSLPF) traverse the membrane as a helical segment. At 78–95 (RMLYYAKGEWPFGEYFCR) the chain is on the extracellular side. A disulfide bridge connects residues cysteine 94 and cysteine 173. Residues 96-116 (ILGALTVFYPSIALWLLAFIS) form a helical membrane-spanning segment. At 117-138 (ADRYMAIVQPKYAKELKNTCKA) the chain is on the cytoplasmic side. The helical transmembrane segment at 139 to 159 (VMACVGVWIMTLTTTIPLLLL) threads the bilayer. The Extracellular segment spans residues 160–192 (YEDPDTASSTPPTCLKISDIIYLKAINALNFTR). Asparagine 189 carries an N-linked (GlcNAc...) asparagine glycan. Residues 193-213 (LIFFFLIPLFIMIGCYLVIIH) form a helical membrane-spanning segment. The Cytoplasmic segment spans residues 214 to 233 (SLLHGKTSKLKPKVKEKSIR). The helical transmembrane segment at 234-254 (IIITLMVQVLVCFMPFHICFA) threads the bilayer. Residues 255–269 (FLMLGGDENSYNPWG) are Extracellular-facing. A helical transmembrane segment spans residues 270–290 (AFTTFLMNLSTCLDVILYYIV). Residues 291–332 (SKQFQARVISVMLYRNYLRSVRRKSFRSGSLRSLSNINSEML) are Cytoplasmic-facing. Serine 323 carries the post-translational modification Phosphoserine.

Belongs to the G-protein coupled receptor 1 family.

Its subcellular location is the cell membrane. It is found in the cytoplasmic vesicle membrane. Its function is as follows. G protein-coupled receptor (GPCR) that plays a role in diverse physiological processes particularly within the immune and nervous systems. Becomes active when triggered by various endogenous ligands including endocannabinoid N-arachidonyl glycine (NAGly), delta-9-tetrahydrocannabinol or resolvin D2/RvD2 derived from the omega-3 fatty acid docosahexaenoic acid (DHA). Upon RvD2 binding, facilitates the resolution of inflammation, aiding in tissue repair and homeostasis. Mechanistically, RvD2 ligation initiates Galphas protein coupling, activation of cAMP-PKA signaling pathway and phosphorylation of STAT3, leading to RvD2-stimulated macrophage phagocytosis. Mediates NAGly-induced process of reorganization of actin filaments and induction of acrosomal exocytosis. Activation by N-arachidonoyl glycine (NAGly) can also induce apoptosis in macrophages. Plays a role in homeostasis of CD8+ subsets of intraepithelial lymphocytes (IELs) (CD8alphaalpha and CD8alphabeta IELs) in small intestine by supporting preferential migration of CD8alphaalpha T-cells to intraepithelial compartment over lamina propria compartment, and by mediating their reconstitution into small intestine after bone marrow transplant. Participates also in hypotensive responses, mediating reduction in intraocular and blood pressure. In Bos taurus (Bovine), this protein is N-arachidonyl glycine receptor (GPR18).